A 167-amino-acid chain; its full sequence is Myelin basic protein (167 aa).

Ala1 carries the N-acetylalanine modification. Phosphoserine occurs at positions 7 and 12. Tyr14 is subject to Phosphotyrosine. Thr17 bears the Phosphothreonine mark. Ser19 carries the post-translational modification Phosphoserine. Position 20 is a phosphothreonine (Thr20). Arg25 and Arg31 each carry citrulline. Phosphothreonine is present on Thr35. Phosphoserine is present on Ser40. 2 positions are modified to omega-N-methylarginine: Arg43 and Arg49. Residues 45–87 are induces experimental autoimmune encephalomyelitis (EAE) 1; sequence FGSDRAAPKRGSGKDSHHAARTTHYGSLPQKSQRSQDENPVVH. The disordered stretch occupies residues 46 to 114; the sequence is GSDRAAPKRG…GRGLSLSRFS (69 aa). Ser56 is modified (phosphoserine). Thr67 is subject to Phosphothreonine. Phosphotyrosine is present on Tyr69. Ser76 bears the Phosphoserine mark. Residues Thr94 and Thr97 each carry the phosphothreonine modification. Residue Gln102 is modified to Deamidated glutamine. Omega-N-methylarginine; alternate is present on Arg106. Arg106 is subject to Symmetric dimethylarginine; alternate. Ser114 carries the post-translational modification Phosphoserine. The interval 114–122 is induces experimental autoimmune encephalomyelitis (EAE) 2; it reads SWGAEGQKP. Position 121 is an N6-acetyllysine (Lys121). The residue at position 129 (Arg129) is a Citrulline. The tract at residues 136 to 167 is disordered; sequence GFKGAHDAQGTLSKIFKLGGRDSRSGSPMARR. At Gln144 the chain carries Deamidated glutamine. A Citrulline modification is found at Arg156. Ser158 carries the post-translational modification Phosphoserine. Ser162 carries the post-translational modification Phosphoserine; by UHMK1. The residue at position 167 (Arg167) is a Citrulline.

Belongs to the myelin basic protein family. Homodimer. At least 5 charge isomers; C1 (the most cationic, least modified, and most abundant form), C2, C3, C4 and C5 (the least cationic form); are produced as a result of optional post-translational modifications such as phosphorylation of serine or threonine residues, deamidation of glutamine or asparagine residues, citrullination and methylation of arginine residues. C1 and C2 are unphosphorylated, C3 and C4 are monophosphorylated and C5 is phosphorylated at two positions. In terms of processing, phosphorylated by TAOK2, VRK2, MAPK11, MAPK12, MAPK14 and MINK1. Post-translationally, proteolytically cleaved in B cell lysosomes by cathepsin CTSG which degrades the major immunogenic MBP epitope and prevents the activation of MBP-specific autoreactive T cells. Found in both the central and the peripheral nervous system.

Its subcellular location is the myelin membrane. Is, with PLP, the most abundant protein component of the myelin membrane in the CNS. Has a role in both the formation and stabilization of this compact multilayer arrangement of bilayers. Each splice variant and charge isomer may have a specialized function in the assembly of an optimized, biochemically functional myelin membrane. The protein is Myelin basic protein (MBP) of Cavia porcellus (Guinea pig).